The sequence spans 286 residues: Thymidylate synthase (286 aa).

DUMP is bound by residues Arg-21 and 136–137 (RR). Catalysis depends on Cys-156, which acts as the Nucleophile. Residues 176 to 179 (RSVD), Asn-187, and 217 to 219 (HIY) contribute to the dUMP site. Asp-179 serves as a coordination point for (6R)-5,10-methylene-5,6,7,8-tetrahydrofolate. A (6R)-5,10-methylene-5,6,7,8-tetrahydrofolate-binding site is contributed by Ala-285.

This sequence belongs to the thymidylate synthase family. As to quaternary structure, homodimer.

It catalyses the reaction dUMP + (6R)-5,10-methylene-5,6,7,8-tetrahydrofolate = 7,8-dihydrofolate + dTMP. It participates in pyrimidine metabolism; dTTP biosynthesis. This chain is Thymidylate synthase (TD), found in Enterobacteria phage T4 (Bacteriophage T4).